Here is a 440-residue protein sequence, read N- to C-terminus: Dynein axonemal assembly factor 11 (440 aa).

LRR repeat units follow at residues 20 to 43 (IFSLEELSLHQQDIQRIEHIHKWC), 44 to 65 (RDLKILYLQNNLIPKIENVGRL), 66 to 89 (KKLEYLNLALNNIEVIENLEGCES), and 90 to 110 (LQKLDLTVNFVGRLSSVETLK). The LRRCT domain occupies 128 to 146 (YQGYRQYVVATVPQLQSLD). A compositionally biased stretch (basic and acidic residues) spans 178 to 192 (EEREKQKSNANEHPE). Disordered regions lie at residues 178–267 (EERE…RTLI) and 363–440 (PKKR…PPLM). Residues 193–211 (INQSLSESQNGTQQYPESS) show a composition bias toward polar residues. A compositionally biased stretch (basic and acidic residues) spans 236–259 (SRLEAHRHLEEKRRANEKEKEKPK). One can recognise a CS domain in the interval 276–374 (VNEPKLDFSL…KRTIRPTSVT (99 aa)). Residues 369-378 (RPTSVTSNQN) show a composition bias toward polar residues. Basic and acidic residues-rich tracts occupy residues 379 to 392 (NKKDTRAAPRRELL) and 420 to 431 (GLEERPVSKDFV).

The protein belongs to the tilB family. As to quaternary structure, interacts with dvl2. Interacts with kur. In terms of tissue distribution, expressed in kinocilia of hair cells.

It is found in the cytoplasm. The protein resides in the dynein axonemal particle. The protein localises to the cell projection. It localises to the cilium. Plays a crucial role in regulating cilia motility in pronephric tubules, cloaca and neural tube. Required for establishing left-right asymmetry of the body plan; controls cell fate and convergent extension (CE) movements during gastrulation, respectively, via the Wnt and the planar cell polarity (PCP) signaling pathways. Required for the proper development of renal glomeruli and tubules. This is Dynein axonemal assembly factor 11 (dnaaf11) from Danio rerio (Zebrafish).